A 173-amino-acid polypeptide reads, in one-letter code: MEEKIRRCVLQVLEATAGTKGEGVYLVSLSIKGSGKGTSIEVLVDTDTGIRIDQCAFLSRRIRECLEVEEESDGMSGDDFNLDVASPGLGKAIILQRQYARHVGRLFRVTFREEDGSMTEISGHLREILFPEEENASLVIEPLGKKKAGKKVSSENRTLRLDRVIRAVPEAEL.

It belongs to the RimP family.

It is found in the cytoplasm. Its function is as follows. Required for maturation of 30S ribosomal subunits. This is Ribosome maturation factor RimP from Chlorobium phaeobacteroides (strain DSM 266 / SMG 266 / 2430).